A 473-amino-acid chain; its full sequence is Bactericidal permeability-increasing protein (473 aa).

An N-terminal signal peptide occupies residues 1-18 (MVLCCWLALVALIPMTLS). The interval 19 to 29 (INPGVKVRLTG) is central sheet, part 1. Residues 28–209 (TGKGLEYGRQ…SDLNPQLKTL (182 aa)) form an N-terminal barrel region. Residues Cys153 and Cys192 are joined by a disulfide bond. A central sheet, part 2 region spans residues 211-275 (VLAKVDQYAE…INNMLYISVS (65 aa)). The segment at 225–230 (MVSSPT) is cleavage sites for elastase. A C-terminal barrel region spans residues 276–446 (AFTINSAAFV…LAKGYPLPTL (171 aa)). An N-linked (GlcNAc...) asparagine glycan is attached at Asn365. The segment at 453-472 (NTELQVLKDYMLIGTDVQFT) is central sheet, part 3.

It belongs to the BPI/LBP/Plunc superfamily. BPI/LBP family. In terms of assembly, monomer. Homodimer; disulfide-linked. In terms of tissue distribution, expressed in spleen. Lower expression in gill, head kidney, entire kidney, skin, intestine and blood and lowest expression in liver and muscle.

It is found in the secreted. The cytotoxic action of BPI is limited to many species of Gram-negative bacteria; this specificity may be explained by a strong affinity of the very basic N-terminal half for the negatively charged lipopolysaccharides that are unique to the Gram-negative bacterial outer envelope. Exhibits neutralizing capacity towards P.aeruginosa lipopolysaccharides (LPS) and has bactericidal activity against multiple drug resistant (MDR) P.aeruginosa strains derived from people with cystic fibrosis. Has antibacterial activity against E.coli, but not against S.iniae. This Sebastes schlegelii (Korean rockfish) protein is Bactericidal permeability-increasing protein.